A 768-amino-acid polypeptide reads, in one-letter code: MATMLRLGARVSVSNSQILATSSVVSTIKTEELMNDHINSLCKSNFYREALEAFDFAQKNSSFKIRLRTYISLICACSSSRSLAQGRKIHDHILNSNCKYDTILNNHILSMYGKCGSLRDAREVFDFMPERNLVSYTSVITGYSQNGQGAEAIRLYLKMLQEDLVPDQFAFGSIIKACASSSDVGLGKQLHAQVIKLESSSHLIAQNALIAMYVRFNQMSDASRVFYGIPMKDLISWSSIIAGFSQLGFEFEALSHLKEMLSFGVFHPNEYIFGSSLKACSSLLRPDYGSQIHGLCIKSELAGNAIAGCSLCDMYARCGFLNSARRVFDQIERPDTASWNVIIAGLANNGYADEAVSVFSQMRSSGFIPDAISLRSLLCAQTKPMALSQGMQIHSYIIKWGFLADLTVCNSLLTMYTFCSDLYCCFNLFEDFRNNADSVSWNTILTACLQHEQPVEMLRLFKLMLVSECEPDHITMGNLLRGCVEISSLKLGSQVHCYSLKTGLAPEQFIKNGLIDMYAKCGSLGQARRIFDSMDNRDVVSWSTLIVGYAQSGFGEEALILFKEMKSAGIEPNHVTFVGVLTACSHVGLVEEGLKLYATMQTEHGISPTKEHCSCVVDLLARAGRLNEAERFIDEMKLEPDVVVWKTLLSACKTQGNVHLAQKAAENILKIDPFNSTAHVLLCSMHASSGNWENAALLRSSMKKHDVKKIPGQSWIEIEDKIHIFFAEDIFHPERDDIYTVLHNIWSQMLDECNPQHKKRLQFIHETG.

The N-terminal 70 residues, 1–70 (MATMLRLGAR…SSFKIRLRTY (70 aa)), are a transit peptide targeting the mitochondrion. PPR repeat units lie at residues 30–60 (TEEL…AQKN), 66–100 (RLRT…NCKY), 101–131 (DTIL…MPER), 132–166 (NLVS…DLVP), 167–201 (DQFA…ESSS), 202–232 (HLIA…IPMK), 233–267 (DLIS…GVFH), 269–303 (NEYI…ELAG), 304–334 (NAIA…IERP), 335–369 (DTAS…GFIP), 370–404 (DAIS…GFLA), 405–435 (DLTV…FRNN), 437–471 (DSVS…ECEP), 472–506 (DHIT…GLAP), 507–537 (EQFI…MDNR), 538–572 (DVVS…GIEP), 573–608 (NHVT…GISP), and 609–639 (TKEH…MKLE). The type E motif stretch occupies residues 644-719 (VWKTLLSACK…IPGQSWIEIE (76 aa)). The tract at residues 720 to 750 (DKIHIFFAEDIFHPERDDIYTVLHNIWSQML) is type E(+) motif.

This sequence belongs to the PPR family. PCMP-E subfamily.

The protein resides in the mitochondrion. The protein is Pentatricopeptide repeat-containing protein At3g53360, mitochondrial (PCMP-E86) of Arabidopsis thaliana (Mouse-ear cress).